Here is a 188-residue protein sequence, read N- to C-terminus: Large ribosomal subunit protein bL35m (188 aa).

Belongs to the bacterial ribosomal protein bL35 family.

It is found in the mitochondrion. The chain is Large ribosomal subunit protein bL35m (MRPL35) from Bos taurus (Bovine).